The following is a 568-amino-acid chain: MARVEL domain-containing protein 2 (568 aa).

Disordered regions lie at residues 1 to 72 (MSGG…YPSD) and 116 to 163 (SGGV…SYNS). Residues 1 to 211 (MSGGGSSSGP…YMKSWAGLLR (211 aa)) are Cytoplasmic-facing. Positions 29–46 (ADPRHPETNLETLHDRDL) are enriched in basic and acidic residues. Residues 52–62 (PLPPPPLPLHP) show a composition bias toward pro residues. An MARVEL domain is found at 205-379 (SWAGLLRILC…SAMVSLKLWR (175 aa)). Residues 212–232 (ILCIVELLLGAAVFACVTAYI) traverse the membrane as a helical segment. Topologically, residues 233 to 266 (HKDNEWYNMFGYSQPYGYTASMQGGYYYSGPKTP) are extracellular. Residues 267–287 (FVLVVAGLAWIVTIILLVLGM) traverse the membrane as a helical segment. Residues 288–303 (SMYYRTILLDSTWWPL) lie on the Cytoplasmic side of the membrane. The chain crosses the membrane as a helical span at residues 304–324 (TEFGINISLFILYMAGAIVYV). Topologically, residues 325-354 (NDTNRGGLCYYQLFNTPVNASFCRVEGGQT) are extracellular. A helical membrane pass occupies residues 355–375 (AAIIFLFVSMLMYFISAMVSL). At 376-568 (KLWRHESARK…KVMDWNDGYN (193 aa)) the chain is on the cytoplasmic side. The 112-residue stretch at 451 to 562 (PDYVAKYQAI…RIQEYDKVMD (112 aa)) folds into the OCEL domain. Positions 462–559 (AEDERERYKA…IKQRIQEYDK (98 aa)) form a coiled coil.

It belongs to the ELL/occludin family.

It is found in the cell membrane. The protein resides in the cell junction. The protein localises to the tight junction. Its function is as follows. May play a role in the formation of the epithelial barrier. In Xenopus tropicalis (Western clawed frog), this protein is MARVEL domain-containing protein 2 (marveld2).